The following is a 353-amino-acid chain: Quinolinate synthase (353 aa).

Positions 47 and 68 each coordinate iminosuccinate. C113 provides a ligand contact to [4Fe-4S] cluster. Residues 139-141 and S156 contribute to the iminosuccinate site; that span reads YAN. C200 contacts [4Fe-4S] cluster. Residues 226-228 and T243 each bind iminosuccinate; that span reads HPE. C297 contacts [4Fe-4S] cluster.

It belongs to the quinolinate synthase family. Type 1 subfamily. [4Fe-4S] cluster is required as a cofactor.

It localises to the cytoplasm. The enzyme catalyses iminosuccinate + dihydroxyacetone phosphate = quinolinate + phosphate + 2 H2O + H(+). Its pathway is cofactor biosynthesis; NAD(+) biosynthesis; quinolinate from iminoaspartate: step 1/1. Catalyzes the condensation of iminoaspartate with dihydroxyacetone phosphate to form quinolinate. The sequence is that of Quinolinate synthase from Vibrio parahaemolyticus serotype O3:K6 (strain RIMD 2210633).